Here is a 134-residue protein sequence, read N- to C-terminus: Small ribosomal subunit protein uS11 (134 aa).

It belongs to the universal ribosomal protein uS11 family. In terms of assembly, part of the 30S ribosomal subunit. Interacts with proteins S7 and S18. Binds to IF-3.

In terms of biological role, located on the platform of the 30S subunit, it bridges several disparate RNA helices of the 16S rRNA. Forms part of the Shine-Dalgarno cleft in the 70S ribosome. The chain is Small ribosomal subunit protein uS11 from Parafrankia sp. (strain EAN1pec).